A 555-amino-acid chain; its full sequence is ATP-dependent RNA helicase MRH4, mitochondrial (555 aa).

The N-terminal 25 residues, 1–25 (MFKLLIPNKYNYVIRPLVRFKSIKS), are a transit peptide targeting the mitochondrion. Positions 101 to 108 (DIKPTPVQ) match the Q motif motif. A Helicase ATP-binding domain is found at 144–361 (ANEIQKTKVF…SKLFPDQRSL (218 aa)). Residue 157–164 (AETGSGKT) coordinates ATP. The DEAD box motif lies at 309 to 312 (DEAD). A Helicase C-terminal domain is found at 395-555 (CLAQALYAIS…NAIIRGLRIG (161 aa)).

This sequence belongs to the DEAD box helicase family. MRH4 subfamily.

It is found in the mitochondrion. The catalysed reaction is ATP + H2O = ADP + phosphate + H(+). In terms of biological role, ATP-binding RNA helicase involved in mitochondrial RNA metabolism. Required for maintenance of mitochondrial DNA. This Candida albicans (strain SC5314 / ATCC MYA-2876) (Yeast) protein is ATP-dependent RNA helicase MRH4, mitochondrial (MRH4).